Here is an 86-residue protein sequence, read N- to C-terminus: Acyl-CoA-binding protein homolog (86 aa).

The 85-residue stretch at 2–86 (VSEQFNAAAE…FVEGLVAKYA (85 aa)) folds into the ACB domain. An acyl-CoA is bound by residues lysine 14, 29–33 (YALFK), lysine 51, lysine 55, and tyrosine 74.

Belongs to the ACBP family. As to expression, expressed in larval and pupal brains. In adults, expressed in cardia, part of the Malpighian tubules, fat body, and gametes of both sexes.

In terms of biological role, binds medium- and long-chain acyl-CoA esters with very high affinity and may function as an intracellular carrier of acyl-CoA esters. May be involved in energy metabolism in a manner that depends on the substrate used for energy production. Dbi and its metabolites are involved in the regulation of multiple biological processes. The chain is Acyl-CoA-binding protein homolog from Drosophila melanogaster (Fruit fly).